The primary structure comprises 604 residues: uncharacterized protein (604 aa).

The N-terminal stretch at 1–40 (MWLQQRIKVFPGLLSSSWARRVLAVSGFLVIIYWYIFSGS) is a signal peptide. The Extracellular portion of the chain corresponds to 41 to 563 (HYRSFWYSGK…EEHMAKQYRG (523 aa)). Asn-337 is a glycosylation site (N-linked (GlcNAc...) asparagine). Residues 564–584 (LPFLFWFSVASLITLFHLFLF) traverse the membrane as a helical segment. Topologically, residues 585–604 (KLIYNEYCGPGAKPLFRSKV) are cytoplasmic.

It localises to the membrane. This is an uncharacterized protein from Xenopus laevis (African clawed frog).